Reading from the N-terminus, the 243-residue chain is Ribonuclease 3 (243 aa).

In terms of domain architecture, RNase III spans 15–144 (NDTISKIINY…LIGAIYIDGG (130 aa)). Glu-57 contacts Mg(2+). Asp-61 is a catalytic residue. Mg(2+) is bound by residues Asn-130 and Glu-133. Glu-133 is an active-site residue. The 70-residue stretch at 169–238 (DPKTSLQEWT…AELMLEKINN (70 aa)) folds into the DRBM domain.

This sequence belongs to the ribonuclease III family. In terms of assembly, homodimer. The cofactor is Mg(2+).

Its subcellular location is the cytoplasm. The enzyme catalyses Endonucleolytic cleavage to 5'-phosphomonoester.. Digests double-stranded RNA. Involved in the processing of primary rRNA transcript to yield the immediate precursors to the large and small rRNAs (23S and 16S). Processes some mRNAs, and tRNAs when they are encoded in the rRNA operon. Processes pre-crRNA and tracrRNA of type II CRISPR loci if present in the organism. The chain is Ribonuclease 3 from Wolbachia sp. subsp. Brugia malayi (strain TRS).